Here is a 314-residue protein sequence, read N- to C-terminus: Lysophospholipase D GDPD1 (314 aa).

Over 1–3 the chain is Extracellular; it reads MSS. The chain crosses the membrane as a helical span at residues 4 to 24; it reads TAAFCLLSTLGGYLVTSFLLL. The Cytoplasmic portion of the chain corresponds to 25–195; the sequence is KYPALLHQRK…VDKCYKENSD (171 aa). A GP-PDE domain is found at 40-309; it reads SRHISHRGGA…DYPTKLKEFL (270 aa). 3 residues coordinate a divalent metal cation: E72, D74, and H87. The chain crosses the membrane as a helical span at residues 196–216; sequence IPILFSLQRVLLILGLFFTGL. At 217–314 the chain is on the extracellular side; sequence LPFVPIREQF…LKEFLNNMSA (98 aa).

The protein belongs to the glycerophosphoryl diester phosphodiesterase family.

It is found in the cytoplasm. The protein localises to the membrane. Its subcellular location is the perinuclear region. The protein resides in the endoplasmic reticulum. The enzyme catalyses a 1-O-alkyl-sn-glycero-3-phosphocholine + H2O = a 1-O-alkyl-sn-glycero-3-phosphate + choline + H(+). The catalysed reaction is 1-hexadecanoyl-sn-glycero-3-phosphocholine + H2O = 1-hexadecanoyl-sn-glycero-3-phosphate + choline + H(+). It catalyses the reaction 1-hexadecanoyl-sn-glycero-3-phosphoethanolamine + H2O = 1-hexadecanoyl-sn-glycero-3-phosphate + ethanolamine + H(+). It carries out the reaction N-hexadecanoyl-sn-glycero-3-phosphoethanolamine + H2O = N-hexadecanoylethanolamine + sn-glycerol 3-phosphate + H(+). The enzyme catalyses N-(5Z,8Z,11Z,14Z-eicosatetraenoyl)-1-(9Z-octadecenoyl)-sn-glycero-3-phosphoethanolamine + H2O = N-(5Z,8Z,11Z,14Z-eicosatetraenoyl)-ethanolamine + 1-(9Z-octadecenoyl)-sn-glycero-3-phosphate + H(+). The catalysed reaction is N,1-di-(9Z-octadecenoyl)-sn-glycero-3-phosphoethanolamine + H2O = N-(9Z-octadecenoyl) ethanolamine + 1-(9Z-octadecenoyl)-sn-glycero-3-phosphate + H(+). It catalyses the reaction N-hexadecanoyl-1-(9Z-octadecenoyl)-sn-glycero-3-phosphoethanolamine + H2O = N-hexadecanoylethanolamine + 1-(9Z-octadecenoyl)-sn-glycero-3-phosphate + H(+). It carries out the reaction 1-O-hexadecyl-sn-glycero-3-phosphocholine + H2O = 1-O-hexadecyl-sn-glycero-3-phosphate + choline + H(+). The enzyme catalyses 1-(9Z-octadecenoyl)-sn-glycero-3-phosphocholine + H2O = 1-(9Z-octadecenoyl)-sn-glycero-3-phosphate + choline + H(+). The catalysed reaction is N,1-dihexadecanoyl-sn-glycero-3-phosphoethanolamine + H2O = N-hexadecanoylethanolamine + 1-hexadecanoyl-sn-glycero-3-phosphate + H(+). It catalyses the reaction 1-O-(1Z-octadecenyl)-sn-glycero-3-phospho-(N-5Z,8Z,11Z,14Z-eicosatetraenoyl)-ethanolamine + H2O = 1-O-(1Z-octadecenyl)-sn-glycero-3-phosphate + N-(5Z,8Z,11Z,14Z-eicosatetraenoyl)-ethanolamine + H(+). It carries out the reaction 1-O-(1Z-octadecenyl)-sn-glycero-3-phospho-(N-9Z-octadecenoyl)-ethanolamine + H2O = 1-O-(1Z-octadecenyl)-sn-glycero-3-phosphate + N-(9Z-octadecenoyl) ethanolamine + H(+). The enzyme catalyses 1-O-(1Z-octadecenyl)-sn-glycero-3-phospho-N-hexadecanoyl-ethanolamine + H2O = 1-O-(1Z-octadecenyl)-sn-glycero-3-phosphate + N-hexadecanoylethanolamine + H(+). With respect to regulation, lysophospholipase D activity is increased by magnesium and manganese and inhibited by calcium in a concentration dependent manner. Loss of lysophospholipase D activity by addition of EDTA. Functionally, hydrolyzes lysoglycerophospholipids to produce lysophosphatidic acid (LPA) and the corresponding amines. Shows a preference for 1-O-alkyl-sn-glycero-3-phosphocholine (lyso-PAF), lysophosphatidylethanolamine (lyso-PE) and lysophosphatidylcholine (lyso-PC). May be involved in bioactive N-acylethanolamine biosynthesis from both N-acyl-lysoplasmenylethanolamin (N-acyl-lysoPlsEt) and N-acyl-lysophosphatidylethanolamin (N-acyl-lysoPE). In addition, hydrolyzes glycerophospho-N-acylethanolamine to N-acylethanolamine. Does not display glycerophosphodiester phosphodiesterase activity, since it cannot hydrolyze either glycerophosphoinositol or glycerophosphocholine. In Rattus norvegicus (Rat), this protein is Lysophospholipase D GDPD1.